Consider the following 149-residue polypeptide: SsrA-binding protein (149 aa).

It belongs to the SmpB family.

Its subcellular location is the cytoplasm. Its function is as follows. Required for rescue of stalled ribosomes mediated by trans-translation. Binds to transfer-messenger RNA (tmRNA), required for stable association of tmRNA with ribosomes. tmRNA and SmpB together mimic tRNA shape, replacing the anticodon stem-loop with SmpB. tmRNA is encoded by the ssrA gene; the 2 termini fold to resemble tRNA(Ala) and it encodes a 'tag peptide', a short internal open reading frame. During trans-translation Ala-aminoacylated tmRNA acts like a tRNA, entering the A-site of stalled ribosomes, displacing the stalled mRNA. The ribosome then switches to translate the ORF on the tmRNA; the nascent peptide is terminated with the 'tag peptide' encoded by the tmRNA and targeted for degradation. The ribosome is freed to recommence translation, which seems to be the essential function of trans-translation. This chain is SsrA-binding protein, found in Wolbachia pipientis wMel.